A 308-amino-acid polypeptide reads, in one-letter code: ATP synthase gamma chain (308 aa).

This sequence belongs to the ATPase gamma chain family. As to quaternary structure, F-type ATPases have 2 components, CF(1) - the catalytic core - and CF(0) - the membrane proton channel. CF(1) has five subunits: alpha(3), beta(3), gamma(1), delta(1), epsilon(1). CF(0) has three main subunits: a, b and c.

It is found in the cell membrane. Produces ATP from ADP in the presence of a proton gradient across the membrane. The gamma chain is believed to be important in regulating ATPase activity and the flow of protons through the CF(0) complex. This Mycobacteroides abscessus (strain ATCC 19977 / DSM 44196 / CCUG 20993 / CIP 104536 / JCM 13569 / NCTC 13031 / TMC 1543 / L948) (Mycobacterium abscessus) protein is ATP synthase gamma chain.